We begin with the raw amino-acid sequence, 185 residues long: Large ribosomal subunit protein uL5 (185 aa).

The protein belongs to the universal ribosomal protein uL5 family. As to quaternary structure, part of the 50S ribosomal subunit; part of the 5S rRNA/L5/L18/L25 subcomplex. Contacts the 5S rRNA and the P site tRNA. Forms a bridge to the 30S subunit in the 70S ribosome.

This is one of the proteins that bind and probably mediate the attachment of the 5S RNA into the large ribosomal subunit, where it forms part of the central protuberance. In the 70S ribosome it contacts protein S13 of the 30S subunit (bridge B1b), connecting the 2 subunits; this bridge is implicated in subunit movement. Contacts the P site tRNA; the 5S rRNA and some of its associated proteins might help stabilize positioning of ribosome-bound tRNAs. The chain is Large ribosomal subunit protein uL5 from Bacteroides thetaiotaomicron (strain ATCC 29148 / DSM 2079 / JCM 5827 / CCUG 10774 / NCTC 10582 / VPI-5482 / E50).